The primary structure comprises 382 residues: Ubiquitin-like protease 4 (382 aa).

The disordered stretch occupies residues glycine 46–arginine 106. Over residues aspartate 84–glutamate 100 the composition is skewed to acidic residues.

The protein belongs to the peptidase C48 family. Expressed in hermaphrodite-specific neurons, head muscles, body wall muscles and pharyngeal cells.

The protein localises to the cytoplasm. It is found in the cytoskeleton. It localises to the microtubule organizing center. Its subcellular location is the centrosome. The protein resides in the nucleus. The protein localises to the mitochondrion matrix. It participates in protein modification; protein sumoylation. Its function is as follows. Protease required for deconjugation of smo-1 conjugates from target proteins which is necessary for cell cycle progression. Required for respiration and the maintenance of normal mitochondrial homeostasis. In response to mitochondrial stress, required for the removal of smo-1 conjugates from the transcription factor dve-1, which promotes the translocation of dve-1 from the cytosol to the nucleus to initiate the mitochondrial unfolded protein response. Furthermore, removes the smo-1 conjugates from the transcription factor atfs-1 to promote its stability and activate the mitochondrial unfolded protein response. Also plays a role in promoting mitochondrial unfolded protein response-mediated innate immunity following infection with P.aeruginosa. The sequence is that of Ubiquitin-like protease 4 from Caenorhabditis elegans.